The sequence spans 107 residues: Putative pterin-4-alpha-carbinolamine dehydratase (107 aa).

It belongs to the pterin-4-alpha-carbinolamine dehydratase family.

The catalysed reaction is (4aS,6R)-4a-hydroxy-L-erythro-5,6,7,8-tetrahydrobiopterin = (6R)-L-erythro-6,7-dihydrobiopterin + H2O. This chain is Putative pterin-4-alpha-carbinolamine dehydratase, found in Rubrobacter xylanophilus (strain DSM 9941 / JCM 11954 / NBRC 16129 / PRD-1).